The chain runs to 347 residues: uncharacterized protein (347 aa).

10 helical membrane-spanning segments follow: residues 15 to 35, 46 to 66, 84 to 104, 111 to 131, 149 to 169, 182 to 202, 214 to 234, 249 to 269, 283 to 303, and 312 to 332; these read FVPS…DSLL, VAVG…VPWV, VLSA…ADFI, FWGG…SLIV, GWYI…LIMP, INYF…AVVI, AMAP…VALI, FYIF…MAII, AMSW…SHLV, and IDYI…ITLI.

The protein belongs to the tellurite-resistance/dicarboxylate transporter (TDT) family.

It is found in the cell membrane. This is an uncharacterized protein from Methanocaldococcus jannaschii (strain ATCC 43067 / DSM 2661 / JAL-1 / JCM 10045 / NBRC 100440) (Methanococcus jannaschii).